The chain runs to 560 residues: Putative ABC transporter ATP-binding protein SP_0483 (560 aa).

2 consecutive ABC transporter domains span residues 6–247 and 297–528; these read IEWK…GIRE and FRLE…ANLK. Residues 40-47 and 329-336 each bind ATP; these read GPSGSGKS and GKNGAGKS.

It belongs to the ABC transporter superfamily.

It localises to the cell membrane. Functionally, probably part of an ABC transporter complex. Responsible for energy coupling to the transport system. The polypeptide is Putative ABC transporter ATP-binding protein SP_0483 (Streptococcus pneumoniae serotype 4 (strain ATCC BAA-334 / TIGR4)).